The chain runs to 762 residues: 5-methyltetrahydropteroyltriglutamate--homocysteine methyltransferase (762 aa).

5-methyltetrahydropteroyltri-L-glutamate contacts are provided by residues 17-20 and Lys-111; that span reads REWK. Residues 435–437 and Glu-488 each bind L-homocysteine; that span reads IGS. L-methionine-binding positions include 435-437 and Glu-488; that span reads IGS. 5-methyltetrahydropteroyltri-L-glutamate contacts are provided by residues 519-520 and Trp-565; that span reads RC. Residue Asp-603 coordinates L-homocysteine. Asp-603 serves as a coordination point for L-methionine. Residue Glu-609 participates in 5-methyltetrahydropteroyltri-L-glutamate binding. His-645, Cys-647, and Glu-669 together coordinate Zn(2+). The Proton donor role is filled by His-698. Cys-730 provides a ligand contact to Zn(2+).

It belongs to the vitamin-B12 independent methionine synthase family. It depends on Zn(2+) as a cofactor.

The catalysed reaction is 5-methyltetrahydropteroyltri-L-glutamate + L-homocysteine = tetrahydropteroyltri-L-glutamate + L-methionine. It participates in amino-acid biosynthesis; L-methionine biosynthesis via de novo pathway; L-methionine from L-homocysteine (MetE route): step 1/1. Its function is as follows. Catalyzes the transfer of a methyl group from 5-methyltetrahydrofolate to homocysteine resulting in methionine formation. This chain is 5-methyltetrahydropteroyltriglutamate--homocysteine methyltransferase, found in Bacillus anthracis (strain A0248).